The chain runs to 241 residues: tRNA pseudouridine synthase B (241 aa).

Residue Asp-45 is the Nucleophile of the active site.

Belongs to the pseudouridine synthase TruB family. Type 1 subfamily.

The catalysed reaction is uridine(55) in tRNA = pseudouridine(55) in tRNA. In terms of biological role, responsible for synthesis of pseudouridine from uracil-55 in the psi GC loop of transfer RNAs. This is tRNA pseudouridine synthase B from Chlamydia muridarum (strain MoPn / Nigg).